Here is an 859-residue protein sequence, read N- to C-terminus: Cation/H(+) antiporter 24 (859 aa).

12 helical membrane-spanning segments follow: residues 64–84 (AFST…VVSI), 92–112 (PRIV…FGGI), 122–142 (PIAN…FLFL), 161–181 (YIAA…GMAM), 194–214 (SIGG…YTVL), 227–247 (FAMS…VIFE), 258–278 (YSVF…LLVV), 291–311 (EGTL…LASC), 312–332 (FLTD…GLLV), 348–368 (TFIY…GTNI), 384–404 (FYMT…AALF), and 438–458 (IVGF…TAVT). Residues 538-566 (IDHEQRKEEEEEEYEEEEEEPERKQSGRI) form a disordered region. Residues 546 to 557 (EEEEEYEEEEEE) are compositionally biased toward acidic residues. The residue at position 857 (Ser-857) is a Phosphoserine.

It belongs to the monovalent cation:proton antiporter 2 (CPA2) transporter (TC 2.A.37) family. CHX (TC 2.A.37.4) subfamily. As to expression, specifically expressed in pollen.

It localises to the membrane. Functionally, may operate as a cation/H(+) antiporter. This is Cation/H(+) antiporter 24 (CHX24) from Arabidopsis thaliana (Mouse-ear cress).